The primary structure comprises 314 residues: Synaptophysin (314 aa).

The Cytoplasmic segment spans residues 1–25; the sequence is MLLLADMDVVNQLVAGGQFRVVKEP. In terms of domain architecture, MARVEL spans 21-228; it reads VVKEPLGFVK…NLWFVFKETG (208 aa). A helical transmembrane segment spans residues 26–49; the sequence is LGFVKVLQWVFAIFAFATCGSYTG. The Vesicular portion of the chain corresponds to 50–107; that stretch reads ELRLSVECANKTESALNIEVEFEYPFRLHQVYFDAPSCVKGGTTKIFLVGDYSSSAEF. Asparagine 59 is a glycosylation site (N-linked (GlcNAc...) asparagine). Residue tyrosine 81 is modified to Phosphotyrosine. The chain crosses the membrane as a helical span at residues 108 to 131; that stretch reads FVTVAVFAFLYSMGALATYIFLQN. At 132–138 the chain is on the cytoplasmic side; it reads KYRENNK. A helical membrane pass occupies residues 139 to 162; that stretch reads GPMMDFLATAVFAFMWLVSSSAWA. At 163 to 200 the chain is on the vesicular side; the sequence is KGLSDVKMATDPENIIKEMPMCRQTGNTCKELRDPVTS. Residues 201 to 224 form a helical membrane-spanning segment; it reads GLNTSVVFGFLNLVLWVGNLWFVF. Residues 225–314 lie on the Cytoplasmic side of the membrane; that stretch reads KETGWAAPFM…GAPTSFSNQM (90 aa). Threonine 227 carries the phosphothreonine modification. Residues 239-314 are disordered; the sequence is GAPEKQPAPG…GAPTSFSNQM (76 aa). Positions 254-264 are enriched in gly residues; it reads AGYGQGPGGYG. A repeats, Gly-rich region spans residues 255-305; that stretch reads GYGQGPGGYGPQDSYGPQGGYQPDYGQPASGGGGGYGPQGDYGQQGYGQQG. Residues 265–282 show a composition bias toward low complexity; the sequence is PQDSYGPQGGYQPDYGQP. Phosphotyrosine is present on residues tyrosine 279 and tyrosine 296. Positions 283-303 are enriched in gly residues; it reads ASGGGGGYGPQGDYGQQGYGQ.

Belongs to the synaptophysin/synaptobrevin family. As to quaternary structure, homohexamer or homotetramer. Interacts with SRCIN1. Interacts with VAMP2; the interaction is inhibited by interaction of VAPM2 with SEPT8. In terms of processing, ubiquitinated; mediated by SIAH1 or SIAH2 and leading to its subsequent proteasomal degradation. Post-translationally, phosphorylated by SRC.

The protein localises to the cytoplasmic vesicle. Its subcellular location is the secretory vesicle. It is found in the synaptic vesicle membrane. It localises to the synapse. The protein resides in the synaptosome. Possibly involved in structural functions as organizing other membrane components or in targeting the vesicles to the plasma membrane. Involved in the regulation of short-term and long-term synaptic plasticity. In Mus musculus (Mouse), this protein is Synaptophysin (Syp).